The sequence spans 361 residues: Spermidine/putrescine import ATP-binding protein PotA (361 aa).

Residues 4–234 (LEIKNVVKRF…PKNRFVADFL (231 aa)) form the ABC transporter domain. ATP is bound at residue 36 to 43 (GPSGCGKT).

It belongs to the ABC transporter superfamily. Spermidine/putrescine importer (TC 3.A.1.11.1) family. The complex is composed of two ATP-binding proteins (PotA), two transmembrane proteins (PotB and PotC) and a solute-binding protein (PotD).

The protein resides in the cell inner membrane. The catalysed reaction is ATP + H2O + polyamine-[polyamine-binding protein]Side 1 = ADP + phosphate + polyamineSide 2 + [polyamine-binding protein]Side 1.. Part of the ABC transporter complex PotABCD involved in spermidine/putrescine import. Responsible for energy coupling to the transport system. The sequence is that of Spermidine/putrescine import ATP-binding protein PotA from Chromobacterium violaceum (strain ATCC 12472 / DSM 30191 / JCM 1249 / CCUG 213 / NBRC 12614 / NCIMB 9131 / NCTC 9757 / MK).